The following is a 285-amino-acid chain: Cell division protein DivIB (285 aa).

Over residues 1–19 (MNEKNKNDESKHQEDKLQD) the composition is skewed to basic and acidic residues. The tract at residues 1-20 (MNEKNKNDESKHQEDKLQDQ) is disordered. Residues 1–66 (MNEKNKNDES…NRFNAMERNS (66 aa)) are Cytoplasmic-facing. Residues 67 to 87 (IHMIVILSIISLLLILLLSPL) traverse the membrane as a helical segment. Positions 88-158 (MRFQKVEITG…QVAQIKIEEN (71 aa)) constitute a POTRA domain. Topologically, residues 88–285 (MRFQKVEITG…FQVGTYFQQY (198 aa)) are extracellular.

This sequence belongs to the FtsQ/DivIB family. DivIB subfamily.

It is found in the cell membrane. Its function is as follows. Cell division protein that may be involved in stabilizing or promoting the assembly of the division complex. This Weissella koreensis (strain KACC 15510) protein is Cell division protein DivIB.